Here is a 154-residue protein sequence, read N- to C-terminus: Myoglobin (154 aa).

A Globin domain is found at 2 to 148; it reads GLSDGEWQLV…FRNDIAAKYK (147 aa). Residue Ser4 is modified to Phosphoserine. His65 provides a ligand contact to nitrite. His65 contributes to the O2 binding site. Thr68 carries the post-translational modification Phosphothreonine. His94 contacts heme b.

Belongs to the globin family. Monomeric.

The protein localises to the cytoplasm. Its subcellular location is the sarcoplasm. The enzyme catalyses Fe(III)-heme b-[protein] + nitric oxide + H2O = Fe(II)-heme b-[protein] + nitrite + 2 H(+). It catalyses the reaction H2O2 + AH2 = A + 2 H2O. Its function is as follows. Monomeric heme protein which primary function is to store oxygen and facilitate its diffusion within muscle tissues. Reversibly binds oxygen through a pentacoordinated heme iron and enables its timely and efficient release as needed during periods of heightened demand. Depending on the oxidative conditions of tissues and cells, and in addition to its ability to bind oxygen, it also has a nitrite reductase activity whereby it regulates the production of bioactive nitric oxide. Under stress conditions, like hypoxia and anoxia, it also protects cells against reactive oxygen species thanks to its pseudoperoxidase activity. The protein is Myoglobin (MB) of Lepilemur mustelinus (Weasel sportive lemur).